The sequence spans 74 residues: UPF0435 protein GK0418 (74 aa).

Belongs to the UPF0435 family.

The sequence is that of UPF0435 protein GK0418 from Geobacillus kaustophilus (strain HTA426).